The sequence spans 146 residues: MKLHELKPSEGSRKVRNRVGRGIGSGNGKTAGKGHKGQNARSGGGVRPGFEGGQMPLFQRLPKRGFTNINRKDYAIVNVDKLNGFAEGTEVTPELLLETGVISKLNAGVKILGNGKLEKKLTVKANKFSASAKEAVEAAGGTAEVI.

Residues 1-13 (MKLHELKPSEGSR) show a composition bias toward basic and acidic residues. The interval 1-54 (MKLHELKPSEGSRKVRNRVGRGIGSGNGKTAGKGHKGQNARSGGGVRPGFEGGQ) is disordered. Composition is skewed to gly residues over residues 21 to 31 (RGIGSGNGKTA) and 42 to 52 (SGGGVRPGFEG).

Belongs to the universal ribosomal protein uL15 family. In terms of assembly, part of the 50S ribosomal subunit.

In terms of biological role, binds to the 23S rRNA. In Bacillus velezensis (strain DSM 23117 / BGSC 10A6 / LMG 26770 / FZB42) (Bacillus amyloliquefaciens subsp. plantarum), this protein is Large ribosomal subunit protein uL15.